Here is a 352-residue protein sequence, read N- to C-terminus: MKIDTFIFLMFISIGILLLLLNIINPMEVFHIVEWKTIFSLFYLMVIINIMRDTKFLDYISLKILKKSKRIFIALIFLTLFLSSLITNDVSLFVIIPLTLIIHRYTNMPFKDLEKLIIFEGVSANIGSGLTPIGNPQNLFLFHFYNIGTLEFIINMIPFEIFGILAILPFLEFKKYDTKINIDIKFKKEWIFYILSFILVLLCVFGYLNFIYILPLILAILMYKRVKVDYLFLLTFIFLFVDIEGLKRIGIINIFSIKCGNVMLMIYASLLSQIISNVPATVLLSHLYKNWLPIAYGVNIGGNGTLIASFANLITLRLSNGNVRVGRFLLIGGIIYIMHLIVLVAYAKIFWV.

Transmembrane regions (helical) follow at residues 6 to 26 (FIFLMFISIGILLLLLNIINP), 30 to 50 (FHIVEWKTIFSLFYLMVIINI), 76 to 96 (IFLTLFLSSLITNDVSLFVII), 151 to 171 (EFIINMIPFEIFGILAILPFL), 197 to 217 (FILVLLCVFGYLNFIYILPLI), 226 to 246 (VKVDYLFLLTFIFLFVDIEGL), 291 to 311 (WLPIAYGVNIGGNGTLIASFA), and 330 to 350 (LIGGIIYIMHLIVLVAYAKIF).

It belongs to the CitM (TC 2.A.11) transporter family.

It localises to the cell membrane. This is an uncharacterized protein from Methanocaldococcus jannaschii (strain ATCC 43067 / DSM 2661 / JAL-1 / JCM 10045 / NBRC 100440) (Methanococcus jannaschii).